We begin with the raw amino-acid sequence, 440 residues long: Transposon Ty1-LR4 Gag polyprotein (440 aa).

Composition is skewed to polar residues over residues 1-10 (MESQQLSQHP), 48-60 (TKANSQQTTTPAS), and 127-152 (QSQFPQYPSSVGTPLSTPSPESGNTF). Disordered regions lie at residues 1–93 (MESQ…MMTQ), 126–173 (PQSQ…RPPP), and 352–440 (GSRN…PGTY). A compositionally biased stretch (low complexity) spans 153 to 165 (TDSSSADSDMTST). The tract at residues 299-401 (NNGIHINNKV…NSKSKTARAH (103 aa)) is RNA-binding. Over residues 402 to 418 (NVSTSNNSPSTDNDSIS) the composition is skewed to low complexity. Residue Ser416 is modified to Phosphoserine. The span at 419 to 428 (KSTTEPIQLN) shows a compositional bias: polar residues. Over residues 429 to 440 (NKHDLHLRPGTY) the composition is skewed to basic and acidic residues.

As to quaternary structure, homotrimer.

Its subcellular location is the cytoplasm. Capsid protein (CA) is the structural component of the virus-like particle (VLP), forming the shell that encapsulates the retrotransposons dimeric RNA genome. The particles are assembled from trimer-clustered units and there are holes in the capsid shells that allow for the diffusion of macromolecules. CA also has nucleocapsid-like chaperone activity, promoting primer tRNA(i)-Met annealing to the multipartite primer-binding site (PBS), dimerization of Ty1 RNA and initiation of reverse transcription. This chain is Transposon Ty1-LR4 Gag polyprotein (TY1A-LR4), found in Saccharomyces cerevisiae (strain ATCC 204508 / S288c) (Baker's yeast).